A 217-amino-acid chain; its full sequence is 25 kDa ookinete surface antigen (217 aa).

The signal sequence occupies residues 1 to 16 (MNKLYSLFLFLFIQLS). The EGF-like 1; truncated domain occupies 30–59 (CKKGFLIQMSGHLECKCENDLVLVNEETCE). 3 EGF-like domains span residues 61–106 (KVLK…NVCI), 106–150 (ILNE…NKCS), and 153–193 (GETK…STCT). 9 disulfides stabilise this stretch: cysteine 65–cysteine 80, cysteine 74–cysteine 92, cysteine 94–cysteine 105, cysteine 110–cysteine 120, cysteine 115–cysteine 133, cysteine 135–cysteine 149, cysteine 157–cysteine 168, cysteine 161–cysteine 177, and cysteine 179–cysteine 192. A glycan (N-linked (GlcNAc...) asparagine) is linked at asparagine 112. Asparagine 165 and asparagine 187 each carry an N-linked (GlcNAc...) asparagine glycan. The GPI-anchor amidated serine moiety is linked to residue serine 196. Residues 197 to 217 (VYNILNLSLIFVLFSVCFFIM) constitute a propeptide, removed in mature form. Asparagine 202 is a glycosylation site (N-linked (GlcNAc...) asparagine).

Its subcellular location is the cell membrane. The chain is 25 kDa ookinete surface antigen from Plasmodium reichenowi.